Consider the following 326-residue polypeptide: MIENTLKIEHHKLIILGSGPAGYTAAIYSARANLEPLLFTGNNKGGQLINTNEIENWPGDSKSLTGLELMERMHNHAKSLNTKIIPNEIIRVNFFKIPFLLVSDTNQYYTSDSVIIATGASPKYLGLTSESKFIGKGVSVCAVCDGFFYKNEDVAVVGGGNTALEEALYLSNIARKVYLIHRRKTFSAEKILISRMLNKTKKNIILRTGCIVNKIIGGVNGVRGVQITCNDSKENKCLINLSGVFIAIGHAPNTKLFKNQLFMKNDYILVKSGIHGNVTQTNIPGIFAAGDVIDHVYKQAITSSASGCMAALDAEKYIDQKYGFKI.

40-47 (TGNNKGGQ) provides a ligand contact to FAD. A disulfide bridge links C141 with C144. 291 to 300 (DVIDHVYKQA) lines the FAD pocket.

It belongs to the class-II pyridine nucleotide-disulfide oxidoreductase family. As to quaternary structure, homodimer. It depends on FAD as a cofactor.

It is found in the cytoplasm. It catalyses the reaction [thioredoxin]-dithiol + NADP(+) = [thioredoxin]-disulfide + NADPH + H(+). This chain is Thioredoxin reductase (trxB), found in Buchnera aphidicola subsp. Baizongia pistaciae (strain Bp).